A 1029-amino-acid polypeptide reads, in one-letter code: Eukaryotic translation initiation factor 3 subunit A (1029 aa).

The stretch at 92–121 (LKKFIELAEQKVTEAQAKADEIQSSLESAA) forms a coiled coil. A PCI domain is found at 339–523 (MTKAASFVLL…GVLTFESDIF (185 aa)). Residues 606–903 (TRRAIIEKRK…EEEAEQRRAA (298 aa)) are a coiled coil. Composition is skewed to basic and acidic residues over residues 621-632 (ALQKKQREEENR), 644-666 (EQQR…EQDR), 797-901 (TEKR…EQRR), and 913-924 (GPAREASPERTA). Disordered stretches follow at residues 621 to 666 (ALQK…EQDR) and 797 to 1029 (TEKR…KQQQ). A compositionally biased stretch (low complexity) spans 943–960 (AKAAASAGEQPAAAQEAT). Basic and acidic residues predominate over residues 977–993 (ATRDGPSDSRDLSHARE).

This sequence belongs to the eIF-3 subunit A family. Component of the eukaryotic translation initiation factor 3 (eIF-3) complex.

It localises to the cytoplasm. Functionally, RNA-binding component of the eukaryotic translation initiation factor 3 (eIF-3) complex, which is involved in protein synthesis of a specialized repertoire of mRNAs and, together with other initiation factors, stimulates binding of mRNA and methionyl-tRNAi to the 40S ribosome. The eIF-3 complex specifically targets and initiates translation of a subset of mRNAs involved in cell proliferation. This Coccidioides immitis (strain RS) (Valley fever fungus) protein is Eukaryotic translation initiation factor 3 subunit A.